Consider the following 252-residue polypeptide: Major prion protein (252 aa).

Positions 1 to 28 are cleaved as a signal peptide; sequence MAHLGYWMLLLFVATWSDVGLCKKRPKP. Residues 23–229 are interaction with GRB2, ERI3 and SYN1; it reads KKRPKPGGGW…ESQAAYQRAA (207 aa). A disordered region spans residues 26–109; the sequence is PKPGGGWNTG…KPSKPKTSMK (84 aa). Tandem repeats lie at residues 51-59, 60-67, 68-75, 76-83, and 84-92. A 5 X 8 AA tandem repeats of P-H-G-G-G-W-G-Q region spans residues 51 to 92; that stretch reads PPQGGGWGQPHGGGWGQPHGGGWGQPHGGGWGQPHGGGWGQG. Positions 53 to 93 are enriched in gly residues; sequence QGGGWGQPHGGGWGQPHGGGWGQPHGGGWGQPHGGGWGQGG. Positions 61, 62, 63, 69, 70, 71, 77, 78, 79, 85, 86, and 87 each coordinate Cu(2+). Cys178 and Cys213 are disulfide-bonded. N-linked (GlcNAc...) asparagine glycosylation is found at Asn180 and Asn196. Ala229 carries the GPI-anchor amidated alanine lipid modification. Positions 230-252 are cleaved as a propeptide — removed in mature form; it reads GVLLFSSPPVILLISFLIFLIVG.

This sequence belongs to the prion family. As to quaternary structure, monomer and homodimer. Has a tendency to aggregate into amyloid fibrils containing a cross-beta spine, formed by a steric zipper of superposed beta-strands. Soluble oligomers may represent an intermediate stage on the path to fibril formation. Copper binding may promote oligomerization. Interacts with GRB2, APP, ERI3/PRNPIP and SYN1. Mislocalized cytosolically exposed PrP interacts with MGRN1; this interaction alters MGRN1 subcellular location and causes lysosomal enlargement. Interacts with KIAA1191.

It is found in the cell membrane. The protein localises to the golgi apparatus. In terms of biological role, its primary physiological function is unclear. Has cytoprotective activity against internal or environmental stresses. May play a role in neuronal development and synaptic plasticity. May be required for neuronal myelin sheath maintenance. May play a role in iron uptake and iron homeostasis. Soluble oligomers are toxic to cultured neuroblastoma cells and induce apoptosis (in vitro). Association with GPC1 (via its heparan sulfate chains) targets PRNP to lipid rafts. Also provides Cu(2+) or Zn(2+) for the ascorbate-mediated GPC1 deaminase degradation of its heparan sulfate side chains. The sequence is that of Major prion protein (PRNP) from Oryctolagus cuniculus (Rabbit).